An 874-amino-acid polypeptide reads, in one-letter code: ATP-dependent RNA helicase DDX54 (874 aa).

Residues 1–76 (MAAGRRVGPG…FPTSECVSDV (76 aa)) are disordered. The segment covering 20–30 (WKKKRLRKRRT) has biased composition (basic residues). Residue T30 is modified to Phosphothreonine. A phosphoserine mark is found at S33, S38, S40, and S74. Acidic residues predominate over residues 39 to 50 (DSDDGEFEIQAE). Residues 95–123 (GGFQSMGLSYPVFKGIMKKGYKVPTPIQR) carry the Q motif motif. In terms of domain architecture, Helicase ATP-binding spans 126–298 (IPVILDGKDV…RAGLTEPVLI (173 aa)). Residue 139–146 (ARTGSGKT) participates in ATP binding. Residues 246 to 249 (DEAD) carry the DEAD box motif. Residues 328-472 (YLLQNVVRPQ…ARPCEEPSVA (145 aa)) enclose the Helicase C-terminal domain. Polar residues predominate over residues 581–590 (ASSKDPSSQM). Residues 581 to 687 (ASSKDPSSQM…PKDFDSERGL (107 aa)) form a disordered region. Low complexity predominate over residues 636-645 (TVEGVFTEVV). The segment covering 664–685 (ETRQRDQEFYVPYRPKDFDSER) has biased composition (basic and acidic residues). 2 positions are modified to phosphoserine: S688 and S690. Residues 712 to 874 (AQNMSRGQQQ…SRKGKMRKRM (163 aa)) are disordered. Polar residues predominate over residues 713–722 (QNMSRGQQQL). Composition is skewed to basic and acidic residues over residues 737-747 (QEDKKKIKTES) and 755-771 (YKRD…KIDD). A phosphoserine mark is found at S774 and S780. Residues 812 to 823 (MRSELKTKEQIL) show a composition bias toward basic and acidic residues. Residues 864 to 874 (PSRKGKMRKRM) show a composition bias toward basic residues.

Belongs to the DEAD box helicase family. DDX54/DBP10 subfamily. Interacts in a hormone-dependent manner with nuclear receptors.

Its subcellular location is the nucleus. It localises to the nucleolus. It catalyses the reaction ATP + H2O = ADP + phosphate + H(+). Has RNA-dependent ATPase activity. Represses the transcriptional activity of nuclear receptors. The protein is ATP-dependent RNA helicase DDX54 (Ddx54) of Mus musculus (Mouse).